The sequence spans 122 residues: Large ribosomal subunit protein uL18 (122 aa).

A compositionally biased stretch (basic residues) spans 1-19 (MSKLSRKQQTQKRHKRLRR). The segment at 1–27 (MSKLSRKQQTQKRHKRLRRNLSGTESR) is disordered.

It belongs to the universal ribosomal protein uL18 family. In terms of assembly, part of the 50S ribosomal subunit; part of the 5S rRNA/L5/L18/L25 subcomplex. Contacts the 5S and 23S rRNAs.

In terms of biological role, this is one of the proteins that bind and probably mediate the attachment of the 5S RNA into the large ribosomal subunit, where it forms part of the central protuberance. This is Large ribosomal subunit protein uL18 from Prochlorococcus marinus (strain NATL1A).